The following is a 213-amino-acid chain: MKVLITGFDSFGGESINPALEAVKMIPENIEGAQVIKLEIPTVFRKSLEKIEEKIEEINPDIVISIGQAGGRFGVTPERVAINMDDARIEDNEGNQPIDISIYEDGESAYFSNLPIKAMVKEMVDNGIPASVSNTAGTFVCNHVMYGVLYLVNKKYKNIRAGFIHVPYIPAQVVNKPNTPSMSINDIAKGLELSIKAIVLNDNDIKTVGGAVC.

Residues Glu-78, Cys-141, and His-165 contribute to the active site.

This sequence belongs to the peptidase C15 family. Homotetramer.

It localises to the cytoplasm. It catalyses the reaction Release of an N-terminal pyroglutamyl group from a polypeptide, the second amino acid generally not being Pro.. Its function is as follows. Removes 5-oxoproline from various penultimate amino acid residues except L-proline. The polypeptide is Pyrrolidone-carboxylate peptidase (Clostridium perfringens (strain SM101 / Type A)).